The chain runs to 526 residues: 3-hydroxy-3-methylglutaryl-coenzyme A reductase 2 (526 aa).

Active-site charge relay system residues include Glu-193, Lys-325, and Asp-401. His-499 acts as the Proton donor in catalysis. Residues 503–526 (NRKTEAPAPQADTISMTHNLPHSD) form a disordered region. Over residues 514 to 526 (DTISMTHNLPHSD) the composition is skewed to polar residues.

This sequence belongs to the HMG-CoA reductase family.

It carries out the reaction (R)-mevalonate + 2 NADP(+) + CoA = (3S)-3-hydroxy-3-methylglutaryl-CoA + 2 NADPH + 2 H(+). It functions in the pathway metabolic intermediate biosynthesis; (R)-mevalonate biosynthesis; (R)-mevalonate from acetyl-CoA: step 3/3. Its function is as follows. This transmembrane glycoprotein is involved in the control of cholesterol biosynthesis. It is the rate-limiting enzyme of the sterol biosynthesis. This is 3-hydroxy-3-methylglutaryl-coenzyme A reductase 2 (hmgB) from Dictyostelium discoideum (Social amoeba).